Here is a 336-residue protein sequence, read N- to C-terminus: MSLETASTPHTTRPEPSRRFSVAPMMDWTDRHCRFFLRLLSRQTLLYTEMVTTGALLHNDAHRFLRHDASEHPLALQLGGSVPADLAACARLAEEAGYDEVNLNVGCPSDRVQNNMIGACLMAHPALVADCVKAMRDAVSTPVTVKHRIGINGRDSYAELSDFVGQVREAGCRSFTVHARIAILEGLSPKENREIPPLRYDIAAQLKRDFPDLEIVLNGGIKTLDECQAHLETFDGVMLGREAYHNPYLLAEVDQQLFGSDAPVVSRSEALAQLRPYIVAHMESGGAMHHVTRHILGLAQGFKGARRFRQLLSADIHKAAEPLAVFDQAVELLQGR.

FMN-binding positions include 24-26 and Gln77; that span reads PMM. Cys107 serves as the catalytic Proton donor. FMN-binding positions include Lys146, His178, 218 to 220, and 240 to 241; these read NGG and GR.

This sequence belongs to the Dus family. DusA subfamily. Requires FMN as cofactor.

The catalysed reaction is 5,6-dihydrouridine(20) in tRNA + NADP(+) = uridine(20) in tRNA + NADPH + H(+). It catalyses the reaction 5,6-dihydrouridine(20) in tRNA + NAD(+) = uridine(20) in tRNA + NADH + H(+). It carries out the reaction 5,6-dihydrouridine(20a) in tRNA + NADP(+) = uridine(20a) in tRNA + NADPH + H(+). The enzyme catalyses 5,6-dihydrouridine(20a) in tRNA + NAD(+) = uridine(20a) in tRNA + NADH + H(+). Functionally, catalyzes the synthesis of 5,6-dihydrouridine (D), a modified base found in the D-loop of most tRNAs, via the reduction of the C5-C6 double bond in target uridines. Specifically modifies U20 and U20a in tRNAs. The chain is tRNA-dihydrouridine(20/20a) synthase from Pseudomonas putida (strain ATCC 47054 / DSM 6125 / CFBP 8728 / NCIMB 11950 / KT2440).